The primary structure comprises 1634 residues: Protein TIC 214 (1634 aa).

The next 5 membrane-spanning stretches (helical) occupy residues Phe25 to Leu45, Ile53 to Ala73, His94 to Ile116, Phe133 to Ile153, and Ile172 to Cys192. Disordered stretches follow at residues Arg216–Glu242 and Gln1365–Ser1395. The segment covering Lys1386–Ser1395 has biased composition (basic and acidic residues).

Belongs to the TIC214 family. Part of the Tic complex.

The protein localises to the plastid. It is found in the chloroplast inner membrane. Involved in protein precursor import into chloroplasts. May be part of an intermediate translocation complex acting as a protein-conducting channel at the inner envelope. This is Protein TIC 214 from Cuscuta exaltata (Tall dodder).